Here is a 727-residue protein sequence, read N- to C-terminus: Testis anion transporter 1 (727 aa).

The Cytoplasmic segment spans residues 1–23 (MLTIFPFLEWMCMYRLKDWLLGD). Residues 24–44 (LLAGISVGLVQVPQGLTLSLL) form a helical membrane-spanning segment. Topologically, residues 45–47 (ARQ) are extracellular. Residues 48–68 (LIPPLNIAYAAFCSSVIYVIF) form a helical membrane-spanning segment. Topologically, residues 69 to 74 (GSCHQM) are cytoplasmic. The helical transmembrane segment at 75–95 (SIGSFFLVSALLINVLKISPL) threads the bilayer. The Extracellular segment spans residues 96-130 (NNGHLVMGSFLKDEFSAPSYLMGYNKSLSVVATTT). N-linked (GlcNAc...) asparagine glycosylation occurs at Asn-120. A helical transmembrane segment spans residues 131–151 (FLTGIIQLIMGVLGLGFIATY). Residues 152–160 (LPESAMSAY) lie on the Cytoplasmic side of the membrane. The chain crosses the membrane as a helical span at residues 161–181 (LAAVALHIMLSQLTCIFGIMI). The Extracellular portion of the chain corresponds to 182–198 (SFHAGPISFFYDIINYC). A helical membrane pass occupies residues 199-219 (VALPKANSTSILLFLTVVVAL). Topologically, residues 220–235 (RINKCIRISFNQYPIE) are cytoplasmic. Residues 236 to 256 (FPMELFLIIGFTVIGNKITMA) form a helical membrane-spanning segment. Residues 257–283 (TETSQTLIDMIPYSFLFPVTPDFSVLP) lie on the Extracellular side of the membrane. The helical transmembrane segment at 284–304 (KIILQAISLSLVSSFLLVFLG) threads the bilayer. The Cytoplasmic segment spans residues 305 to 360 (KKIASLHNYSVNSNQDLIAIGLCNVVSSFFRSCVFTGAVARTIIQDKSGGRQQFAS). The helical transmembrane segment at 361–381 (LVGAGVMLLLMVKMGHFFYAL) threads the bilayer. Over 382 to 383 (PN) the chain is Extracellular. The chain crosses the membrane as a helical span at residues 384–404 (AVLAGIILSNVVPYLETISNL). Residues 405–424 (PSLWRQDQYDCALWMMTFSS) lie on the Cytoplasmic side of the membrane. Residues 425–445 (SIFLGLDIGLIISVVSAFFIT) traverse the membrane as a helical segment. Residues 446–727 (SVRSHRAKIL…LPSFHLQHIF (282 aa)) lie on the Extracellular side of the membrane. Residues 471–722 (DYREIITIPG…NSLSRLPSFH (252 aa)) form the STAS domain. The interval 592–727 (TVSSMSQKNQ…LPSFHLQHIF (136 aa)) is interaction with RACGAP1.

Belongs to the SLC26A/SulP transporter (TC 2.A.53) family. Interacts with RACGAP1. Interacts with CFTR; stimulates anion transport activity of CFTR. N-glycosylated.

Its subcellular location is the membrane. It catalyses the reaction sulfate(out) + chloride(in) = sulfate(in) + chloride(out). The catalysed reaction is oxalate(in) + chloride(out) = oxalate(out) + chloride(in). Its function is as follows. Antiporter that mediates the exchange of sulfate and oxalate against chloride ions across a membrane. Stimulates anion transport activity of CFTR. May cooperate with CFTR in the regulation of chloride and bicarbonate ions fluxes required for activation of the ADCY10/PKA pathway during sperm motility and sperm capacitation. May play a role in sperm tail differentiation and motility and hence male fertility. This chain is Testis anion transporter 1, found in Macaca fascicularis (Crab-eating macaque).